The chain runs to 269 residues: 4-hydroxy-tetrahydrodipicolinate reductase (269 aa).

Residues 11–16 (GASGRM) and glutamate 37 contribute to the NAD(+) site. Position 38 (arginine 38) interacts with NADP(+). NAD(+) contacts are provided by residues 101–103 (GTT) and 125–128 (AGNM). Histidine 158 serves as the catalytic Proton donor/acceptor. Residue histidine 159 participates in (S)-2,3,4,5-tetrahydrodipicolinate binding. Catalysis depends on lysine 162, which acts as the Proton donor. Residue 168–169 (GT) coordinates (S)-2,3,4,5-tetrahydrodipicolinate.

The protein belongs to the DapB family.

It is found in the cytoplasm. It carries out the reaction (S)-2,3,4,5-tetrahydrodipicolinate + NAD(+) + H2O = (2S,4S)-4-hydroxy-2,3,4,5-tetrahydrodipicolinate + NADH + H(+). The enzyme catalyses (S)-2,3,4,5-tetrahydrodipicolinate + NADP(+) + H2O = (2S,4S)-4-hydroxy-2,3,4,5-tetrahydrodipicolinate + NADPH + H(+). It functions in the pathway amino-acid biosynthesis; L-lysine biosynthesis via DAP pathway; (S)-tetrahydrodipicolinate from L-aspartate: step 4/4. Catalyzes the conversion of 4-hydroxy-tetrahydrodipicolinate (HTPA) to tetrahydrodipicolinate. The protein is 4-hydroxy-tetrahydrodipicolinate reductase of Cereibacter sphaeroides (strain ATCC 17023 / DSM 158 / JCM 6121 / CCUG 31486 / LMG 2827 / NBRC 12203 / NCIMB 8253 / ATH 2.4.1.) (Rhodobacter sphaeroides).